Here is a 745-residue protein sequence, read N- to C-terminus: Chitin synthase D (745 aa).

5 consecutive transmembrane segments (helical) span residues 26 to 46, 55 to 75, 412 to 432, 434 to 454, and 464 to 484; these read LAHR…PVHL, VLML…IPWL, TTAL…SSIN, LPVG…FYLG, and LFPL…VYGI. Disordered stretches follow at residues 613–635 and 672–745; these read TGDN…SLHQ and ILPH…ESMV. Residues 707-720 show a composition bias toward polar residues; it reads NASTRGSMEGNTPE.

It belongs to the chitin synthase family. Class VI subfamily.

It localises to the cell membrane. The enzyme catalyses [(1-&gt;4)-N-acetyl-beta-D-glucosaminyl](n) + UDP-N-acetyl-alpha-D-glucosamine = [(1-&gt;4)-N-acetyl-beta-D-glucosaminyl](n+1) + UDP + H(+). In terms of biological role, polymerizes chitin, a structural polymer of the cell wall and septum, by transferring the sugar moiety of UDP-GlcNAc to the non-reducing end of the growing chitin polymer. The polypeptide is Chitin synthase D (chsD) (Aspergillus fumigatus (strain ATCC MYA-4609 / CBS 101355 / FGSC A1100 / Af293) (Neosartorya fumigata)).